Consider the following 437-residue polypeptide: GTPase Der (437 aa).

2 consecutive EngA-type G domains span residues 4 to 168 (NIVA…PEKP) and 178 to 353 (PRFA…ENRK). GTP contacts are provided by residues 10 to 17 (GRPNVGKS), 57 to 61 (DTGGY), 120 to 123 (NKVD), 184 to 191 (GRPNAGKS), 231 to 235 (DTAGI), and 296 to 299 (NKWD). A KH-like domain is found at 354 to 437 (QRISTSKFNE…VPIDIYIREK (84 aa)).

The protein belongs to the TRAFAC class TrmE-Era-EngA-EngB-Septin-like GTPase superfamily. EngA (Der) GTPase family. In terms of assembly, associates with the 50S ribosomal subunit.

GTPase that plays an essential role in the late steps of ribosome biogenesis. The polypeptide is GTPase Der (Flavobacterium johnsoniae (strain ATCC 17061 / DSM 2064 / JCM 8514 / BCRC 14874 / CCUG 350202 / NBRC 14942 / NCIMB 11054 / UW101) (Cytophaga johnsonae)).